Here is a 70-residue protein sequence, read N- to C-terminus: Large ribosomal subunit protein bL31 (70 aa).

Zn(2+) contacts are provided by Cys16, Cys18, Cys37, and Cys40.

This sequence belongs to the bacterial ribosomal protein bL31 family. Type A subfamily. As to quaternary structure, part of the 50S ribosomal subunit. It depends on Zn(2+) as a cofactor.

In terms of biological role, binds the 23S rRNA. The sequence is that of Large ribosomal subunit protein bL31 from Enterobacter sp. (strain 638).